A 340-amino-acid chain; its full sequence is MDVNEFDFNLPESLIAQTPLQDRTASRLLTLNKHTGEIKHTNFKSIIDYLNTGDTLVLNDTKVMPARLFGVKEDTGAKIEMLMLTEHDNGWEVLIKPAKRVTIGTRISFGEGKIVAICVEELDQGGRIMQLNYEGILQERLDELGLMPLPPYIKETLEDQSRYQTVYARATGSAAAPTAGLHFTESLLEDIKAKGINIAYITLHVGLGTFRPVSVDDVESHKMHSEYYEMSEETAKLLNDTRDSGNRIITVGTTSTRTLETIADDSGHFTAQSGWTDIFIYPGYSFKAVDAMITNFHLPKSTLVMLVSSLATKEFIMNAYNEAVNEKYRFFSFGDAMFIY.

The protein belongs to the QueA family. Monomer.

Its subcellular location is the cytoplasm. The enzyme catalyses 7-aminomethyl-7-carbaguanosine(34) in tRNA + S-adenosyl-L-methionine = epoxyqueuosine(34) in tRNA + adenine + L-methionine + 2 H(+). Its pathway is tRNA modification; tRNA-queuosine biosynthesis. Transfers and isomerizes the ribose moiety from AdoMet to the 7-aminomethyl group of 7-deazaguanine (preQ1-tRNA) to give epoxyqueuosine (oQ-tRNA). This is S-adenosylmethionine:tRNA ribosyltransferase-isomerase from Macrococcus caseolyticus (strain JCSC5402) (Macrococcoides caseolyticum).